The chain runs to 598 residues: Glutamyl-tRNA(Gln) amidotransferase subunit E (598 aa).

This sequence belongs to the GatB/GatE family. GatE subfamily. In terms of assembly, heterodimer of GatD and GatE.

It carries out the reaction L-glutamyl-tRNA(Gln) + L-glutamine + ATP + H2O = L-glutaminyl-tRNA(Gln) + L-glutamate + ADP + phosphate + H(+). Allows the formation of correctly charged Gln-tRNA(Gln) through the transamidation of misacylated Glu-tRNA(Gln) in organisms which lack glutaminyl-tRNA synthetase. The reaction takes place in the presence of glutamine and ATP through an activated gamma-phospho-Glu-tRNA(Gln). The GatDE system is specific for glutamate and does not act on aspartate. In Thermoplasma volcanium (strain ATCC 51530 / DSM 4299 / JCM 9571 / NBRC 15438 / GSS1), this protein is Glutamyl-tRNA(Gln) amidotransferase subunit E.